The following is a 180-amino-acid chain: Uterocalin (180 aa).

Positions 1–18 (MNLLLLAMGLILPRRPHA) are cleaved as a signal peptide. A disulfide bridge connects residues Cys-82 and Cys-175. Asn-101 carries an N-linked (GlcNAc...) asparagine glycan.

Belongs to the calycin superfamily. Lipocalin family. As to expression, expressed in glandular and lumenal epithelia of the endometrium. Is transferred to the embryonic capsule, the conceptus and the yolk sac.

It localises to the secreted. Its function is as follows. Binds fatty acids and retinol. Is specialized for the preattachment embryo. May be important to maintain the pregnancy and may transport small hydrophobic ligands from mother to the developing embryo. In Equus caballus (Horse), this protein is Uterocalin.